A 772-amino-acid polypeptide reads, in one-letter code: Protocadherin beta-6 (772 aa).

The first 28 residues, 1–28 (METTLAKTPEKRQVVFLAILLLLWEAGS), serve as a signal peptide directing secretion. 5 consecutive Cadherin domains span residues 31-133 (IRYS…SPEF), 134-242 (PDTE…APEF), 243-346 (VQSL…APKL), 347-450 (TISS…APAF), and 451-560 (TQTS…APFI). Residues 31 to 690 (IRYSIPEETE…QDEDMLTLYL (660 aa)) lie on the Extracellular side of the membrane. Cys-96 and Cys-102 are joined by a disulfide. N-linked (GlcNAc...) asparagine glycosylation is present at Asn-169. O-linked (Man) serine glycosylation occurs at Ser-223. Thr-225 carries O-linked (Man) threonine glycosylation. Asn-417 is a glycosylation site (N-linked (GlcNAc...) asparagine). An N-linked (GlcNAc...) asparagine glycan is attached at Asn-566. In terms of domain architecture, Cadherin 6 spans 575–675 (LPRAAEPGYL…SQPYLPLPEV (101 aa)). Residues 691-711 (VIALASVSSLFLLSVLLFVGV) form a helical membrane-spanning segment. The Cytoplasmic segment spans residues 712-772 (RLCRRVREAS…DFKFLNHYSQ (61 aa)).

Forms homodimers in trans (molecules expressed by two different cells). Forms promiscuous heterodimers in cis (at the plasma membrane of the same cell) with other protocadherins.

It localises to the cell membrane. Its function is as follows. Calcium-dependent cell-adhesion protein involved in cells self-recognition and non-self discrimination. Thereby, it is involved in the establishment and maintenance of specific neuronal connections in the brain. This Mus musculus (Mouse) protein is Protocadherin beta-6.